We begin with the raw amino-acid sequence, 185 residues long: Large ribosomal subunit protein uL5m (185 aa).

Belongs to the universal ribosomal protein uL5 family.

The protein localises to the mitochondrion. The sequence is that of Large ribosomal subunit protein uL5m (RPL5) from Brassica napus (Rape).